Consider the following 501-residue polypeptide: MSPYFKLSSALIFLAITMEALCSPIENTSTSNKDNDKETEHIEISAKPSGISRGALGQGFEIHREDLLSKQFEATGEKIFEDLPMDECTVTTTLGTIERDDSFYNSTESLYQSVASSTKISGSLKGAYTLGVSVAAVTNNIASSEEEVQGLSLNLKAYSMSSILKKNCVNTKPLSKDLVSDFEALDSEITKPWKLSSWKKYKVLLEKYGSRIVKESISGSSIYQYVFAKSSQKFNHRSFTVKACVSLAGPTKVGKLSFSGCTGVSQQEIEQSSSQSMIKKLVVRGGKTETRASLIGELDPDQINKFLIEAETDPSPIQYKFEPIWTILKTRYVGTEHFAKAVNLEQFYKGFLHFGCSYLHTTSAENKVAEMQKFDFAKTSDPDAPTYVCKVGPEGCQHHEDCHYRAAFWCECGGPYDLARTCFRHKFKKLKSGLTKKECYPNKESGFAWHGCRLHGLTCWCSAPNRSWEESWSGEDTNNALNDVHQVLMEKKRRDNAQQQY.

A signal peptide spans 1–22 (MSPYFKLSSALIFLAITMEALC). The propeptide occupies 23–35 (SPIENTSTSNKDN). An MACPF domain is found at 23 to 359 (SPIENTSTSN…GFLHFGCSYL (337 aa)). Residues 135–159 (AAVTNNIASSEEEVQGLSLNLKAYS) adopt a coiled-coil conformation. The EGF-like domain occupies 388–422 (VCKVGPEGCQHHEDCHYRAAFWCECGGPYDLARTC). 3 disulfides stabilise this stretch: cysteine 389–cysteine 402, cysteine 396–cysteine 410, and cysteine 412–cysteine 422.

The protein localises to the secreted. The protein resides in the nematocyst. In terms of biological role, causes lethal toxicity to the shrimp Palaemon paucidence, and hemolytic activity toward sheep red blood cells. The chain is DELTA-alicitoxin-Pse2a from Phyllodiscus semoni (Night anemone).